A 174-amino-acid chain; its full sequence is Gamma-crystallin D (174 aa).

2 consecutive Beta/gamma crystallin 'Greek key' domains span residues Gly-2 to Ser-40 and Gly-41 to Pro-83. The segment at His-84–Ser-87 is connecting peptide. 2 consecutive Beta/gamma crystallin 'Greek key' domains span residues His-88 to Glu-128 and Gly-129 to Met-171.

This sequence belongs to the beta/gamma-crystallin family. As to expression, detected in the superior olivary complex and fibers of the ventral aoustic stria of the auditory hindbrain.

In terms of biological role, crystallins are the dominant structural components of the vertebrate eye lens. The protein is Gamma-crystallin D (Crygd) of Rattus norvegicus (Rat).